We begin with the raw amino-acid sequence, 445 residues long: 6-phosphogluconate dehydrogenase, decarboxylating (445 aa).

Residues 1–4 (AVMG), 22–24 (NRS), 63–65 (VKA), and N91 each bind NADP(+). Residues N91 and 117–119 (SGG) contribute to the substrate site. The Proton acceptor role is filled by K172. Residue 175–176 (HN) coordinates substrate. Residue E179 is the Proton donor of the active site. Positions 180, 249, 276, 434, and 440 each coordinate substrate.

Belongs to the 6-phosphogluconate dehydrogenase family. As to quaternary structure, homodimer.

The catalysed reaction is 6-phospho-D-gluconate + NADP(+) = D-ribulose 5-phosphate + CO2 + NADPH. It participates in carbohydrate degradation; pentose phosphate pathway; D-ribulose 5-phosphate from D-glucose 6-phosphate (oxidative stage): step 3/3. In terms of biological role, catalyzes the oxidative decarboxylation of 6-phosphogluconate to ribulose 5-phosphate and CO(2), with concomitant reduction of NADP to NADPH. In Raoultella planticola (Klebsiella planticola), this protein is 6-phosphogluconate dehydrogenase, decarboxylating (gnd).